A 612-amino-acid polypeptide reads, in one-letter code: Oligopeptide transport ATP-binding protein OppD (612 aa).

The ABC transporter 1 domain maps to 5–255 (LEVTDLAVTF…RRMPYTVGLL (251 aa)). ATP contacts are provided by Ser43, Gly44, Ser45, Gly46, Lys47, Ser48, Ala49, Tyr61, Gln96, Arg147, Gly158, Glu159, and His213. [4Fe-4S] cluster is bound by residues Cys286, Cys292, Cys299, and Cys317. The ABC transporter 2 domain maps to 350-600 (VRVRHLVKTY…PKHEYTRRLL (251 aa)). Residues Ser396, Gly397, Ser398, Gly399, Lys400, Ser401, Thr402, Gln445, Arg495, Glu499, Gly503, and His558 each coordinate ATP.

Belongs to the ABC transporter superfamily. In terms of assembly, the complex is composed of an ATP-binding protein (OppD), two transmembrane proteins (OppB and OppC) and a solute-binding protein (OppA).

It localises to the cell inner membrane. It catalyses the reaction a [peptide](out) + ATP + H2O = a [peptide](in) + ADP + phosphate + H(+). In terms of biological role, part of the ABC transporter complex OppABCD involved in the uptake of oligopeptides. Responsible for energy coupling to the transport system. This chain is Oligopeptide transport ATP-binding protein OppD, found in Mycobacterium bovis (strain ATCC BAA-935 / AF2122/97).